The sequence spans 311 residues: Aldose reductase B (311 aa).

13 to 23 (DIHHIPMIGLG) is a binding site for NADP(+). Y54 (proton donor) is an active-site residue. Position 116 (H116) interacts with substrate. 219–273 (SPLGQGKCDLLSNETLKSIADKHNKTVANVIFKWLNQRGIVTIPKSSNPARIIEN) contacts NADP(+).

The protein belongs to the aldo/keto reductase family.

It carries out the reaction an alditol + NAD(+) = an aldose + NADH + H(+). It catalyses the reaction an alditol + NADP(+) = an aldose + NADPH + H(+). In terms of biological role, catalyzes the NADPH-dependent reduction of a wide variety of carbonyl-containing compounds to their corresponding alcohols with a broad range of catalytic efficiencies. The polypeptide is Aldose reductase B (alrB) (Dictyostelium discoideum (Social amoeba)).